Consider the following 206-residue polypeptide: Imidazoleglycerol-phosphate dehydratase (206 aa).

Residues 1–21 (MTALDSSRLLQPRTASVHRRT) are disordered.

This sequence belongs to the imidazoleglycerol-phosphate dehydratase family.

It is found in the cytoplasm. The catalysed reaction is D-erythro-1-(imidazol-4-yl)glycerol 3-phosphate = 3-(imidazol-4-yl)-2-oxopropyl phosphate + H2O. The protein operates within amino-acid biosynthesis; L-histidine biosynthesis; L-histidine from 5-phospho-alpha-D-ribose 1-diphosphate: step 6/9. In Synechococcus sp. (strain JA-2-3B'a(2-13)) (Cyanobacteria bacterium Yellowstone B-Prime), this protein is Imidazoleglycerol-phosphate dehydratase.